The following is a 277-amino-acid chain: MTTRAQAPVGVFDSGLGGLSVLRAIRAELPAESLLYLADSRHAPYGEKPPEFIAGRTLRVCEWLVGQGCKALVIACNTATAQAVHLLREQLAVPVIGVEPGLKPAVATSRSRVVGVLATESTLRSDKFARLLGNVSGDCRVLCQPGYGLVPLIERGDTHSPAVLELLRAYLLPMLEAGADTLVLGCTHYPFLQDAIREIAGDRLTLIDTGHAVARHLGRTLAAAHLQATGAAASPRFLSTADVLPLQAMVAALLGEAPMAQRIDIGDTAVPPLASHQ.

Substrate-binding positions include 13 to 14 and 45 to 46; these read DS and YG. Cys-76 serves as the catalytic Proton donor/acceptor. 77 to 78 contributes to the substrate binding site; the sequence is NT. Cys-186 functions as the Proton donor/acceptor in the catalytic mechanism. Residue 187-188 coordinates substrate; it reads TH.

The protein belongs to the aspartate/glutamate racemases family.

The enzyme catalyses L-glutamate = D-glutamate. It functions in the pathway cell wall biogenesis; peptidoglycan biosynthesis. Provides the (R)-glutamate required for cell wall biosynthesis. The protein is Glutamate racemase of Ralstonia nicotianae (strain ATCC BAA-1114 / GMI1000) (Ralstonia solanacearum).